The following is a 241-amino-acid chain: 1-(5-phosphoribosyl)-5-[(5-phosphoribosylamino)methylideneamino] imidazole-4-carboxamide isomerase (241 aa).

Residue Asp-10 is the Proton acceptor of the active site. Asp-131 serves as the catalytic Proton donor.

The protein belongs to the HisA/HisF family.

The protein localises to the cytoplasm. The enzyme catalyses 1-(5-phospho-beta-D-ribosyl)-5-[(5-phospho-beta-D-ribosylamino)methylideneamino]imidazole-4-carboxamide = 5-[(5-phospho-1-deoxy-D-ribulos-1-ylimino)methylamino]-1-(5-phospho-beta-D-ribosyl)imidazole-4-carboxamide. It participates in amino-acid biosynthesis; L-histidine biosynthesis; L-histidine from 5-phospho-alpha-D-ribose 1-diphosphate: step 4/9. The polypeptide is 1-(5-phosphoribosyl)-5-[(5-phosphoribosylamino)methylideneamino] imidazole-4-carboxamide isomerase (Bifidobacterium longum subsp. infantis (strain ATCC 15697 / DSM 20088 / JCM 1222 / NCTC 11817 / S12)).